The chain runs to 563 residues: Calnexin homolog (563 aa).

The N-terminal stretch at 1-23 is a signal peptide; sequence MRFNAAITGALVSSATLMGQAHA. Residues 24 to 493 are Lumenal-facing; that stretch reads EETEKKADAT…PINAVKQVPE (470 aa). Residue Asp98 participates in Ca(2+) binding. A disulfide bond links Cys141 and Cys175. Residues Tyr145, Lys147, Tyr166, and Asp173 each coordinate an alpha-D-glucoside. The N-linked (GlcNAc...) asparagine glycan is linked to Asn236. Residues 241 to 323 are disordered; it reads EDFAPPVNPE…EKPEDWDDEE (83 aa). Residues 249–279 are compositionally biased toward basic and acidic residues; sequence PEKEIDDPKDKKPADWVDEAKIPDPEAKKPD. Residues 253-386 are p domain (Extended arm); the sequence is IDDPKDKKPA…RKIPNPAYFE (134 aa). Acidic residues predominate over residues 280 to 305; sequence DWDEDAPYEIVDEEATMPEDWLEDEP. Cys337 and Cys343 are disulfide-bonded. Residue Glu402 participates in an alpha-D-glucoside binding. Asp413 contacts Ca(2+). The chain crosses the membrane as a helical span at residues 494 to 514; the sequence is VAGGLGALLLTMILVIVGAVG. The Cytoplasmic segment spans residues 515 to 563; it reads ASSPAPAAAAKKGKEAASAAKEKASEAVSSAADTAKGAATKRNTRSSAQ. Residues 521–563 are disordered; that stretch reads AAAAKKGKEAASAAKEKASEAVSSAADTAKGAATKRNTRSSAQ. The span at 526–539 shows a compositional bias: basic and acidic residues; sequence KGKEAASAAKEKAS.

The protein belongs to the calreticulin family.

It is found in the endoplasmic reticulum membrane. Interacts with newly synthesized monoglucosylated glycoproteins in the endoplasmic reticulum. It may act in assisting protein assembly and/or in the retention within the ER of unassembled protein subunits. It seems to play a major role in the quality control apparatus of the ER by the retention of incorrectly folded proteins. The polypeptide is Calnexin homolog (Aspergillus fumigatus (strain ATCC MYA-4609 / CBS 101355 / FGSC A1100 / Af293) (Neosartorya fumigata)).